Consider the following 411-residue polypeptide: Lissencephaly-1 homolog (411 aa).

The LisH domain maps to Gln9–Gly41. The stretch at Thr56–Ala83 forms a coiled coil. WD repeat units lie at residues Gly106–Lys147, His149–Lys187, Gly191–Thr230, Gly233–Glu272, Ala275–Val334, Gly337–Thr376, and Ala379–Arg411.

This sequence belongs to the WD repeat LIS1/nudF family.

It is found in the cytoplasm. It localises to the cytoskeleton. The protein localises to the microtubule organizing center. Its subcellular location is the centrosome. Its function is as follows. Positively regulates the activity of the minus-end directed microtubule motor protein dynein. May enhance dynein-mediated microtubule sliding by targeting dynein to the microtubule plus end. Required for several dynein- and microtubule-dependent processes. The protein is Lissencephaly-1 homolog of Glossina morsitans morsitans (Savannah tsetse fly).